The sequence spans 105 residues: Small ribosomal subunit protein uS10 (105 aa).

Belongs to the universal ribosomal protein uS10 family. Part of the 30S ribosomal subunit.

Functionally, involved in the binding of tRNA to the ribosomes. This chain is Small ribosomal subunit protein uS10, found in Rickettsia peacockii (strain Rustic).